We begin with the raw amino-acid sequence, 422 residues long: MQCDFVDRILNEYDLLNAIVYRSKFTHEVKVGDVIIGGNNPIVVQSMALGGSGDVYQDAREVLELAQAGSELVRIAINSDKAIKSVPYIRDVLINHGFNSKMIIGCGQYEIARLVKQYPECALALGKIRINPGNIGFGDKRDKNFEDIIEFAIKNDIPIRIGVNWGSLDKYLAAKLMHDNSLRGTPDPDYVVLRKALVISAITSAKHAEKVGLPANKIVISCKVSKVRDLISVYTMLSKICDYPLHLGLTEAGSGVKGIVGSSAGISYLLLHGIGNTIRVSLTQQPGESRTNEVKLCQEILQSIGLRNFSVQVTSCPGCNRTNPKYFHQLVSDVNKYVADRMSVWKNANPGVENMTIAVMGCVVNGPGESKHANLGISMPGYGERSVAAVYQNGEKLCTLEGNNIFEQFVSIIENYVSIYYH.

Residues C316, C319, C362, and E369 each coordinate [4Fe-4S] cluster.

The protein belongs to the IspG family. [4Fe-4S] cluster is required as a cofactor.

It catalyses the reaction (2E)-4-hydroxy-3-methylbut-2-enyl diphosphate + oxidized [flavodoxin] + H2O + 2 H(+) = 2-C-methyl-D-erythritol 2,4-cyclic diphosphate + reduced [flavodoxin]. It participates in isoprenoid biosynthesis; isopentenyl diphosphate biosynthesis via DXP pathway; isopentenyl diphosphate from 1-deoxy-D-xylulose 5-phosphate: step 5/6. In terms of biological role, converts 2C-methyl-D-erythritol 2,4-cyclodiphosphate (ME-2,4cPP) into 1-hydroxy-2-methyl-2-(E)-butenyl 4-diphosphate. The chain is 4-hydroxy-3-methylbut-2-en-1-yl diphosphate synthase (flavodoxin) from Ehrlichia ruminantium (strain Welgevonden).